The following is a 401-amino-acid chain: Homocysteine-responsive endoplasmic reticulum-resident ubiquitin-like domain member 2 protein (401 aa).

One can recognise a Ubiquitin-like domain in the interval 10 to 89 (VTLIIKAPNQ…HMVHLVCASR (80 aa)). A disordered region spans residues 87–137 (ASRSPPSSPKSSTDGESHGALASSTNSNSDHSDSTTPSPSQESLSLVAGSS). 2 stretches are compositionally biased toward low complexity: residues 88–98 (SRSPPSSPKSS) and 109–126 (SSTNSNSDHSDSTTPSPS). A helical membrane pass occupies residues 299–319 (FIMVMGAMLLVYLHQAGWFPF).

It is found in the membrane. Could be involved in the unfolded protein response (UPR) pathway. In Rattus norvegicus (Rat), this protein is Homocysteine-responsive endoplasmic reticulum-resident ubiquitin-like domain member 2 protein (Herpud2).